A 408-amino-acid polypeptide reads, in one-letter code: Energy-coupling factor transporter ATP-binding protein EcfA1 (408 aa).

An ABC transporter domain is found at 140–374; sequence IEINHLSFKY…KDFLRNIQLD (235 aa). 174-181 lines the ATP pocket; the sequence is GHNGSGKS.

It belongs to the ABC transporter superfamily. Energy-coupling factor EcfA family. In terms of assembly, forms a stable energy-coupling factor (ECF) transporter complex composed of 2 membrane-embedded substrate-binding proteins (S component), 2 ATP-binding proteins (A component) and 2 transmembrane proteins (T component).

The protein resides in the cell membrane. Its function is as follows. ATP-binding (A) component of a common energy-coupling factor (ECF) ABC-transporter complex. Unlike classic ABC transporters this ECF transporter provides the energy necessary to transport a number of different substrates. This is Energy-coupling factor transporter ATP-binding protein EcfA1 from Mycoplasma mycoides subsp. mycoides SC (strain CCUG 32753 / NCTC 10114 / PG1).